Here is a 695-residue protein sequence, read N- to C-terminus: HIPL1 protein (695 aa).

The first 23 residues, 1-23, serve as a signal peptide directing secretion; the sequence is MKLHQFLVFLFLFLSCFALSSWA. N-linked (GlcNAc...) asparagine glycosylation is found at asparagine 37, asparagine 67, asparagine 107, asparagine 113, asparagine 128, asparagine 151, asparagine 175, asparagine 190, asparagine 208, asparagine 337, asparagine 429, asparagine 511, asparagine 527, asparagine 641, and asparagine 648. A lipid anchor (GPI-anchor amidated serine) is attached at serine 665. A propeptide spans 666–695 (removed in mature form); the sequence is SSCYKHINGFHGSLVVLFVSLSLILLGLLN.

This sequence belongs to the PQQ oxidoreductase GdhB family. Pyrroloquinoline quinone is required as a cofactor.

It localises to the cell membrane. This Arabidopsis thaliana (Mouse-ear cress) protein is HIPL1 protein (HIPL1).